A 565-amino-acid chain; its full sequence is Glucose-6-phosphate isomerase (565 aa).

The active-site Proton donor is the Glu373. Residues His404 and Lys530 contribute to the active site.

Belongs to the GPI family.

Its subcellular location is the cytoplasm. The enzyme catalyses alpha-D-glucose 6-phosphate = beta-D-fructose 6-phosphate. The protein operates within carbohydrate biosynthesis; gluconeogenesis. It functions in the pathway carbohydrate degradation; glycolysis; D-glyceraldehyde 3-phosphate and glycerone phosphate from D-glucose: step 2/4. Its function is as follows. Catalyzes the reversible isomerization of glucose-6-phosphate to fructose-6-phosphate. This chain is Glucose-6-phosphate isomerase, found in Corynebacterium jeikeium (strain K411).